A 132-amino-acid polypeptide reads, in one-letter code: CLAVATA3/ESR (CLE)-related protein 2-B (132 aa).

The first 26 residues, 1 to 26 (MASRMGMVAILSLFVCALVASTSVNA), serve as a signal peptide directing secretion. Positions 68–132 (NRASKQLDRE…IGPPPFLDRY (65 aa)) are disordered. Residues proline 82 and proline 85 each carry the hydroxyproline modification. Proline 85 carries an O-linked (Ara...) hydroxyproline glycan.

It belongs to the CLV3/ESR signal peptide family. The O-glycosylation (arabinosylation) of the hydroxyproline Pro-85 enhances binding affinity of the ESR2Bp peptide for its receptor. In terms of tissue distribution, seed endosperm.

It is found in the secreted. The protein localises to the extracellular space. Functionally, extracellular signal peptide that regulates cell fate. The chain is CLAVATA3/ESR (CLE)-related protein 2-B from Zea mays (Maize).